A 113-amino-acid polypeptide reads, in one-letter code: MHEMALCEGIIGIVEEEARKRAFAKVNVVCLEIGALSHVAPEALQFCFEAVAARTIAQGAKLEIVETPGTAWCMACSKSVEIKQRYEPCPSCGGYQLQVTGGEEMRVRELEVD.

Residue histidine 2 coordinates Ni(2+). Cysteine 73, cysteine 76, cysteine 89, and cysteine 92 together coordinate Zn(2+).

It belongs to the HypA/HybF family.

Its function is as follows. Involved in the maturation of [NiFe] hydrogenases. Required for nickel insertion into the metal center of the hydrogenase. The chain is Hydrogenase maturation factor HypA 2 from Bradyrhizobium diazoefficiens (strain JCM 10833 / BCRC 13528 / IAM 13628 / NBRC 14792 / USDA 110).